A 201-amino-acid chain; its full sequence is Small ribosomal subunit protein uS4c (201 aa).

Positions 16 to 37 (GALPGLTSKRPRSGSDLRNQSR) are disordered. The region spanning 89-152 (MRLDNTLFRL…RSRTLIQNHI (64 aa)) is the S4 RNA-binding domain.

It belongs to the universal ribosomal protein uS4 family. Part of the 30S ribosomal subunit. Contacts protein S5. The interaction surface between S4 and S5 is involved in control of translational fidelity.

It localises to the plastid. The protein resides in the chloroplast. One of the primary rRNA binding proteins, it binds directly to 16S rRNA where it nucleates assembly of the body of the 30S subunit. In terms of biological role, with S5 and S12 plays an important role in translational accuracy. This is Small ribosomal subunit protein uS4c (rps4) from Chloranthus spicatus (Chulantree).